Reading from the N-terminus, the 194-residue chain is A-type ATP synthase subunit E (194 aa).

The protein belongs to the V-ATPase E subunit family. As to quaternary structure, has multiple subunits with at least A(3), B(3), C, D, E, F, H, I and proteolipid K(x).

It localises to the cell membrane. In terms of biological role, component of the A-type ATP synthase that produces ATP from ADP in the presence of a proton gradient across the membrane. This Saccharolobus islandicus (strain M.16.27) (Sulfolobus islandicus) protein is A-type ATP synthase subunit E.